Consider the following 306-residue polypeptide: Solute carrier family 25 member 48 (306 aa).

Solcar repeat units follow at residues 3 to 86, 101 to 200, and 209 to 296; these read SFQL…TQRF, RSLS…LSEW, and PSPY…SLKA. A run of 6 helical transmembrane segments spans residues 9–29, 61–81, 107–127, 184–204, 212–232, and 272–290; these read FVAG…LDTV, GMSF…GVFS, LLAS…VELI, IPGY…ITPE, YAAW…ATPM, and ITVN…FLGY.

It belongs to the mitochondrial carrier (TC 2.A.29) family.

The protein resides in the mitochondrion inner membrane. The protein is Solute carrier family 25 member 48 (Slc25a48) of Mus musculus (Mouse).